We begin with the raw amino-acid sequence, 1088 residues long: DNA-directed RNA polymerase subunit beta (1088 aa).

This sequence belongs to the RNA polymerase beta chain family. As to quaternary structure, in plastids the minimal PEP RNA polymerase catalytic core is composed of four subunits: alpha, beta, beta', and beta''. When a (nuclear-encoded) sigma factor is associated with the core the holoenzyme is formed, which can initiate transcription.

The protein resides in the plastid. Its subcellular location is the chloroplast. It catalyses the reaction RNA(n) + a ribonucleoside 5'-triphosphate = RNA(n+1) + diphosphate. In terms of biological role, DNA-dependent RNA polymerase catalyzes the transcription of DNA into RNA using the four ribonucleoside triphosphates as substrates. The chain is DNA-directed RNA polymerase subunit beta from Chlorokybus atmophyticus (Soil alga).